A 297-amino-acid polypeptide reads, in one-letter code: Transmembrane protein 169 (297 aa).

Positions 1–84 (MEEPALVEGQ…PKEEEGDDFI (84 aa)) are disordered. Residues 1–159 (MEEPALVEGQ…CQLGADRGPH (159 aa)) lie on the Extracellular side of the membrane. Residues 9–18 (GQSQLPSPHH) show a composition bias toward polar residues. Acidic residues predominate over residues 60–84 (ETLDEEPGESEGGDQPKEEEGDDFI). The helical transmembrane segment at 160-180 (VVLWTLVCLPVVFLLSFVVSF) threads the bilayer. Topologically, residues 181–210 (YYGTITWYNIFLVYNEERTFWHKISCCPCL) are cytoplasmic. A helical membrane pass occupies residues 211 to 231 (ILCYPVLIMAMASSLGLYAAV). Topologically, residues 232–297 (VQLSWSWEAW…ATQEIETSAV (66 aa)) are extracellular.

The protein localises to the membrane. The protein is Transmembrane protein 169 (TMEM169) of Bos taurus (Bovine).